A 1025-amino-acid chain; its full sequence is Serine/threonine-protein kinase TAO2 (1025 aa).

The 254-residue stretch at 28 to 281 folds into the Protein kinase domain; the sequence is FADLREIGHG…SDMLLKHRFL (254 aa). ATP is bound by residues 34 to 42 and Lys57; that span reads IGHGSFGAV. Asp151 serves as the catalytic Proton acceptor. The segment covering 349–373 has biased composition (low complexity); the sequence is ESSQSVPSMSISASSQSSSVNSLAD. The segment at 349–377 is disordered; it reads ESSQSVPSMSISASSQSSSVNSLADASDD. Coiled coils occupy residues 457-650 and 755-876; these read SALR…ECAM and ILKR…EIEA. Disordered stretches follow at residues 899–930 and 945–1025; these read FNQG…QNTG and SASW…LSYS. A compositionally biased stretch (pro residues) spans 905 to 914; the sequence is APPPGWPSRP. The span at 947 to 986 shows a compositional bias: low complexity; that stretch reads SWGLHPPGSSSSLSALPSSSSSSSSSPSSSSGGRPGLLLL. Polar residues predominate over residues 1007–1025; sequence SRSTSVTSQLSNGSHLSYS.

This sequence belongs to the protein kinase superfamily. STE Ser/Thr protein kinase family. STE20 subfamily. Requires Mg(2+) as cofactor.

The catalysed reaction is L-seryl-[protein] + ATP = O-phospho-L-seryl-[protein] + ADP + H(+). It carries out the reaction L-threonyl-[protein] + ATP = O-phospho-L-threonyl-[protein] + ADP + H(+). In terms of biological role, serine/threonine-protein kinase involved in different processes such as apoptotic morphological changes, MAPK8/JNK and MAPK14/p38 MAPK signaling pathway. Activates the JNK MAP kinase pathway. The chain is Serine/threonine-protein kinase TAO2 (taok2) from Xenopus laevis (African clawed frog).